Consider the following 1026-residue polypeptide: Multidrug resistance protein MdtC (1026 aa).

A run of 10 helical transmembrane segments spans residues 12–34 (VATL…LLPV), 336–353 (QSLI…FLFL), 360–382 (AIPA…LCGF), 431–450 (VGFT…LPLL), 463–485 (FAVT…TPML), 525–547 (HARW…YISI), 853–875 (LLLI…ESYV), 895–917 (LEWF…IGIV), 948–970 (LLRF…PLVL), and 985–1007 (TIVG…VYLF).

It belongs to the resistance-nodulation-cell division (RND) (TC 2.A.6) family. MdtC subfamily. As to quaternary structure, part of a tripartite efflux system composed of MdtA, MdtB and MdtC. MdtC forms a heteromultimer with MdtB.

It localises to the cell inner membrane. The sequence is that of Multidrug resistance protein MdtC from Pectobacterium atrosepticum (strain SCRI 1043 / ATCC BAA-672) (Erwinia carotovora subsp. atroseptica).